The sequence spans 129 residues: Protein Turandot A1 (129 aa).

The first 21 residues, 1-21 (MNSSTALMCFALLLISPLCMG), serve as a signal peptide directing secretion. An N-linked (GlcNAc...) asparagine glycan is attached at asparagine 49.

Belongs to the Turandot family.

Its subcellular location is the secreted. A humoral factor that plays a role in stress tolerance; gives increased resistance to the lethal effects of bacterial challenge and stress. Regulated by the JAK/STAT pathway and NF-KB-like Relish pathway in the fat body, upd3 in the hemocytes and Mekk1 in response to septic injury and consequent immune response. The polypeptide is Protein Turandot A1 (TotA1) (Drosophila simulans (Fruit fly)).